A 155-amino-acid polypeptide reads, in one-letter code: 3-hydroxyacyl-[acyl-carrier-protein] dehydratase FabZ (155 aa).

H58 is a catalytic residue.

Belongs to the thioester dehydratase family. FabZ subfamily.

The protein resides in the cytoplasm. It catalyses the reaction a (3R)-hydroxyacyl-[ACP] = a (2E)-enoyl-[ACP] + H2O. Functionally, involved in unsaturated fatty acids biosynthesis. Catalyzes the dehydration of short chain beta-hydroxyacyl-ACPs and long chain saturated and unsaturated beta-hydroxyacyl-ACPs. The polypeptide is 3-hydroxyacyl-[acyl-carrier-protein] dehydratase FabZ (Alkalilimnicola ehrlichii (strain ATCC BAA-1101 / DSM 17681 / MLHE-1)).